The following is a 517-amino-acid chain: MADDNGKNPMPNDRGYDTLLTAFNNLKLYANYNHQEPGESGNTNINSNNNHPNPPLLTAFKSLKLYANKNNQEPGESGNTTINRNKNHPNPPLVTAFNNLELYANYNHQEPGESGTTNINNNNPNPPLLTAFDNLRLYANYNHQEPGESSNNNYPNLNVYNVGHISAASFNAPPFTPSSLTQPDDSSSRYSGKPFPPPPLSFVSPGVDKDRNWLSSLLDMMTCAQRFTEFQKYLQDLDTYPTAERESHLFKIGSALTTTKRIFLHLATNQYGSQALRILFRRSPSLDHLLFCAVDTNFFLLMSDKYGRGLIIPAIRAVDKTKKESLYKLTYEYTLHLARLETGCLALNNVLQEIRGIYRDLIFECVANNADWLSFDPYGTHVVQNILILQNPVATTAIAERLRGSFFRLAMERQGSYVVEKCLKSDFARDQVLEEFRGNAKEWVRMTTDKFGNFVVQSALRVMKEKEMRPLLREFVEKLRPHFGKMEIGRGRNTLRVIQEEIVGWINQLPDKSGYVN.

Disordered regions lie at residues Asn33–Leu57, Lys69–Val94, Asn107–Thr130, and Phe175–Ser201. Residues Asn42 to His51 show a composition bias toward low complexity. The segment covering Lys69–Arg84 has biased composition (polar residues). One can recognise a PUM-HD domain in the interval Glu148–Ile502. Polar residues predominate over residues Pro177–Tyr190. The Pumilio 1; degenerate repeat unit spans residues Thr258–Ala293. The Pumilio 2 repeat unit spans residues Val294 to Lys328. One copy of the Pumilio 3; degenerate repeat lies at Leu329–Phe363. Pumilio repeat units lie at residues Glu364–Glu400, Arg401–Arg437, and Gly438–Arg473.

It is found in the cytoplasm. Functionally, sequence-specific RNA-binding protein that regulates translation and mRNA stability by binding the 3'-UTR of target mRNAs. This chain is Putative pumilio homolog 21 (APUM21), found in Arabidopsis thaliana (Mouse-ear cress).